Consider the following 266-residue polypeptide: Glutamate racemase (266 aa).

Residues 9–10 and 41–42 contribute to the substrate site; these read DS and YG. The active-site Proton donor/acceptor is C72. A substrate-binding site is contributed by 73-74; sequence NT. C183 serves as the catalytic Proton donor/acceptor. Substrate is bound at residue 184 to 185; that stretch reads TH.

The protein belongs to the aspartate/glutamate racemases family.

It carries out the reaction L-glutamate = D-glutamate. It participates in cell wall biogenesis; peptidoglycan biosynthesis. Provides the (R)-glutamate required for cell wall biosynthesis. In Listeria innocua serovar 6a (strain ATCC BAA-680 / CLIP 11262), this protein is Glutamate racemase.